Consider the following 161-residue polypeptide: Nucleotide-binding protein Bcep18194_A5887 (161 aa).

This sequence belongs to the YajQ family.

In terms of biological role, nucleotide-binding protein. The polypeptide is Nucleotide-binding protein Bcep18194_A5887 (Burkholderia lata (strain ATCC 17760 / DSM 23089 / LMG 22485 / NCIMB 9086 / R18194 / 383)).